Here is an 811-residue protein sequence, read N- to C-terminus: Auxin response factor 8 (811 aa).

The TF-B3 DNA-binding region spans 126-228 (FCKTLTASDT…QLFLGIRHAT (103 aa)). 2 disordered regions span residues 467 to 496 (HQYL…HLMH) and 544 to 565 (HLQQ…SDFT). 2 stretches are compositionally biased toward polar residues: residues 469-482 (YLQQ…DLML) and 544-555 (HLQQWQQQSEMP). One can recognise a PB1 domain in the interval 705-789 (KNFVKVYKSG…WYIKILSPED (85 aa)).

This sequence belongs to the ARF family. In terms of assembly, homodimers and heterodimers. As to expression, expressed in the whole plant.

The protein resides in the nucleus. Auxin response factors (ARFs) are transcriptional factors that bind specifically to the DNA sequence 5'-TGTCTC-3' found in the auxin-responsive promoter elements (AuxREs). Seems to act as transcriptional activator. Formation of heterodimers with Aux/IAA proteins may alter their ability to modulate early auxin response genes expression. Regulates both stamen and gynoecium maturation. Promotes jasmonic acid production. Partially redundant with ARF6. Involved in fruit initiation. Acts as an inhibitor to stop further carpel development in the absence of fertilization and the generation of signals required to initiate fruit and seed development. The polypeptide is Auxin response factor 8 (ARF8) (Arabidopsis thaliana (Mouse-ear cress)).